The chain runs to 253 residues: Flagellar brake protein YcgR (253 aa).

The 120-residue stretch at 120–239 folds into the PilZ domain; it reads QRRDFYRFAT…NEGLINRYVY (120 aa).

The protein belongs to the YcgR family. As to quaternary structure, monomer. Interacts with the flagellar basal bodies.

The protein resides in the bacterial flagellum basal body. Acts as a flagellar brake, regulating swimming and swarming in a bis-(3'-5') cyclic diguanylic acid (c-di-GMP)-dependent manner. Binds 1 c-di-GMP dimer per subunit. Increasing levels of c-di-GMP lead to decreased motility. The protein is Flagellar brake protein YcgR of Methylotenera mobilis (strain JLW8 / ATCC BAA-1282 / DSM 17540).